The sequence spans 373 residues: Histidinol-phosphate aminotransferase (373 aa).

Lysine 233 bears the N6-(pyridoxal phosphate)lysine mark.

It belongs to the class-II pyridoxal-phosphate-dependent aminotransferase family. Histidinol-phosphate aminotransferase subfamily. As to quaternary structure, homodimer. It depends on pyridoxal 5'-phosphate as a cofactor.

The catalysed reaction is L-histidinol phosphate + 2-oxoglutarate = 3-(imidazol-4-yl)-2-oxopropyl phosphate + L-glutamate. The protein operates within amino-acid biosynthesis; L-histidine biosynthesis; L-histidine from 5-phospho-alpha-D-ribose 1-diphosphate: step 7/9. The chain is Histidinol-phosphate aminotransferase from Nitratidesulfovibrio vulgaris (strain ATCC 29579 / DSM 644 / CCUG 34227 / NCIMB 8303 / VKM B-1760 / Hildenborough) (Desulfovibrio vulgaris).